The sequence spans 253 residues: tRNA (guanine-N(1)-)-methyltransferase (253 aa).

Residues Gly-113 and 133–138 (IGDYVL) contribute to the S-adenosyl-L-methionine site.

It belongs to the RNA methyltransferase TrmD family. Homodimer.

It localises to the cytoplasm. It carries out the reaction guanosine(37) in tRNA + S-adenosyl-L-methionine = N(1)-methylguanosine(37) in tRNA + S-adenosyl-L-homocysteine + H(+). In terms of biological role, specifically methylates guanosine-37 in various tRNAs. This chain is tRNA (guanine-N(1)-)-methyltransferase, found in Chloroflexus aurantiacus (strain ATCC 29366 / DSM 635 / J-10-fl).